We begin with the raw amino-acid sequence, 745 residues long: MAVRATVSRFPIDSDAQEASGLPWGLTVTPFAAKDENGIGPACGSNGHLLPRCENCYAYFNTYCELDQWAWNCSLCGTLNGLPSDAIARYSNPHSIPEMTSSFIDLEMPLDGSEEEMTQARPVYVAAIDISSSEEFLELTKSALLAALEALSPGALFGLVTFSHKIGLYDVQGPIPVVKNVFIPPDGESSLSLELEDVMPLLQFLAPVETCKDRIAAALETLRPITSWERSAGAGQGMDSVLMGGRGFGTAMEALFNYLGSEFGNTFALARVFAFLSGPPDYGRGQLDTSRYGEQYASKRVDADRALLPEQTPFYKDLATIAVQSGVCVDLFAVTNEYTDLASLKFLSIESGGSLFLYSSTDDSTLPQDMFRMLNRPYAFNCVLRLRTSTEFKPGNSFGHFFPDPQYENLQHIICCDSYATYAYDFEFADNTGFSRHSGEQPVVQIAFQYTVVVPPEGLSNSEMSSSSRGKHTLQRRLRIRTMQFGTAHNINEIYDSVDHEVVLSLLVHKVILASLEDGVREGRALLHDWLVILTAQYNDAFNLVQYKNGNKSMSSQIDITFSQCPQLEPLPRLVFALLRNPLLRFHEEGVHPDYRIYLQCLFSVLDPSSLHCGIYPALMSYSTPDTLAYPRHSLSRAALITSGSPIFFLDAYTTLIVFYSSTADPSIPFPPPQDCLLRQTINKVKQERSITPKLVFIRGGRDDATVFENYLIEEQDVDGNGFASAMGFVSFLDDISQRVTEYMK.

4 residues coordinate Zn(2+): C53, C56, C73, and C76. Residues 53–76 (CENCYAYFNTYCELDQWAWNCSLC) are zinc finger-like.

This sequence belongs to the SEC23/SEC24 family. SEC24 subfamily. As to quaternary structure, component of the coat protein complex II (COPII), composed of at least five proteins: the Sec23/24 complex, the Sec13/31 complex and Sar1. In terms of tissue distribution, mostly expressed in closed floral bud, pollen and flowers, and, to a lower extent, in mature siliques, roots and leaf primordia.

The protein resides in the cytoplasmic vesicle. The protein localises to the COPII-coated vesicle membrane. Its subcellular location is the endoplasmic reticulum membrane. It is found in the membrane. Functionally, component of the coat protein complex II (COPII) which promotes the formation of transport vesicles from the endoplasmic reticulum (ER). The coat has two main functions, the physical deformation of the endoplasmic reticulum membrane into vesicles and the selection of cargo molecules. May contribute to COPII-coated vesicles formation and ER-Golgi vesicle transport. Together with SEC23A, essential for pollen wall development and exine patterning, probably by regulating endoplasmic reticulum (ER) export of lipids and proteins (e.g. sporopollenin) necessary for pollen wall formation. Also involved in plastid physiology in anther tapetal cells. The chain is Protein transport protein SEC23 D from Arabidopsis thaliana (Mouse-ear cress).